Consider the following 670-residue polypeptide: Oligopeptidase PepF (670 aa).

His456 is a Zn(2+) binding site. Glu457 is an active-site residue. Positions 460 and 463 each coordinate Zn(2+).

This sequence belongs to the peptidase M3B family. Zn(2+) serves as cofactor.

The protein localises to the cytoplasm. Functionally, overexpression results in inhibition of sporulation initiation. This sporulation deficiency could be the result of hydrolysis by PepF of the PhrA peptide, a phosphatase regulator. Thus, overexpression of PepF appears to act at the level of the phosphorelay, most likely through modulation of the negative role played by phosphatases. Overexpression of PepF also affects the activity of the competence and sporulation stimulating factor PhrC. This chain is Oligopeptidase PepF, found in Bacillus subtilis (strain 168).